The chain runs to 181 residues: Protoporphyrinogen IX dehydrogenase [quinone] (181 aa).

The Flavodoxin-like domain occupies 3-172 (TLILFSTRDG…QVANFAREIA (170 aa)). Residues 9 to 13 (TRDGQ) and 84 to 152 (FYSV…ETDT) contribute to the FMN site.

Belongs to the HemG family. It depends on FMN as a cofactor.

Its subcellular location is the cell inner membrane. It carries out the reaction protoporphyrinogen IX + 3 a menaquinone = protoporphyrin IX + 3 a menaquinol. It catalyses the reaction protoporphyrinogen IX + 3 a ubiquinone = protoporphyrin IX + 3 a ubiquinol. The enzyme catalyses protoporphyrinogen IX + 3 a quinone = protoporphyrin IX + 3 a quinol. Its pathway is porphyrin-containing compound metabolism; protoporphyrin-IX biosynthesis; protoporphyrin-IX from protoporphyrinogen-IX: step 1/1. Its function is as follows. Catalyzes the 6-electron oxidation of protoporphyrinogen IX to form protoporphyrin IX; under anaerobic conditions uses menaquinone as an electron acceptor, under aerobic condition uses ubiquinone as an electron acceptor. This chain is Protoporphyrinogen IX dehydrogenase [quinone], found in Escherichia coli O157:H7.